Reading from the N-terminus, the 950-residue chain is Glycine dehydrogenase (decarboxylating) (950 aa).

Lys-698 is subject to N6-(pyridoxal phosphate)lysine.

Belongs to the GcvP family. In terms of assembly, the glycine cleavage system is composed of four proteins: P, T, L and H. Requires pyridoxal 5'-phosphate as cofactor.

The enzyme catalyses N(6)-[(R)-lipoyl]-L-lysyl-[glycine-cleavage complex H protein] + glycine + H(+) = N(6)-[(R)-S(8)-aminomethyldihydrolipoyl]-L-lysyl-[glycine-cleavage complex H protein] + CO2. The glycine cleavage system catalyzes the degradation of glycine. The P protein binds the alpha-amino group of glycine through its pyridoxal phosphate cofactor; CO(2) is released and the remaining methylamine moiety is then transferred to the lipoamide cofactor of the H protein. This chain is Glycine dehydrogenase (decarboxylating), found in Neisseria meningitidis serogroup A / serotype 4A (strain DSM 15465 / Z2491).